A 494-amino-acid chain; its full sequence is MGGRVSKAVACCCCRSQHHGVVVESSEKTAEEDHGESYELPAFQEFSFEQLRLATSGFAVENIVSEHGEKAPNVVYKGKLDAQRRIAVKRFNRSAWPDPRQFLEEAKSVGQLRSKRLANLLGCCCEGDERLLVAEYMPNDTLAKHLFHWEAQAMKWPMRLRVVLYLAEALEYCTSKGRALYHDLNAYRVLFDDDCNPRLSCFGLMKNSRDGKSYSTNLAFTPPEYMRTGRITPESVIYSFGTLLLDVLSGKHIPPSHALDLIRDRNFNMLTDSCLEGQFSNEEGTELVRLASRCLHYEPRERPNVRSLVQALAPLQKDLETPSYELMDIPRGGATSVQSLLLSPLAEACSRKDLTAIHEILEKTGYKDDEGTANELSFQMWTNQMQDTLNSKKKGDNAFRQKDFSSAIDCYSQFIEVGTMVSPTIYARRCLSYLMNDKAEQALSDAMQALVISPTWPTAFYLQAAALLSLGMENEAQEAIKDGCAHETSSSSGH.

The N-myristoyl glycine moiety is linked to residue G2. In terms of domain architecture, Protein kinase spans 61-316; the sequence is ENIVSEHGEK…SLVQALAPLQ (256 aa). Residues 67–75 and K89 contribute to the ATP site; that span reads HGEKAPNVV. D183 (proton acceptor) is an active-site residue. Residues S213 and S215 each carry the phosphoserine modification. Residues 423-456 form a TPR repeat; the sequence is PTIYARRCLSYLMNDKAEQALSDAMQALVISPTW.

In terms of assembly, interacts with BRI1 and BSL1. Post-translationally, phosphorylated at Ser-213 and Ser-215 by BRI1. Phosphorylation at Ser-215 is required for its function in the regulation of brassinosteroid signaling. Phosphorylation by BRI1 disrupts the interaction between its TPR and kinase domains, thereby increasing the binding between its kinase domain and BSL1.

It localises to the cell membrane. It carries out the reaction L-seryl-[protein] + ATP = O-phospho-L-seryl-[protein] + ADP + H(+). The enzyme catalyses L-threonyl-[protein] + ATP = O-phospho-L-threonyl-[protein] + ADP + H(+). Functionally, probable serine/threonine kinase that acts as a positive regulator of brassinosteroid (BR) signaling downstream of BRI1. This Oryza sativa subsp. japonica (Rice) protein is Probable serine/threonine-protein kinase BSK3.